The sequence spans 479 residues: Alpha,alpha-trehalose-phosphate synthase [UDP-forming] 2 (479 aa).

D-glucose 6-phosphate is bound by residues tyrosine 96 and aspartate 150. Positions 287 and 292 each coordinate UDP. UDP-alpha-D-glucose is bound by residues arginine 287 and lysine 292. Arginine 325 lines the D-glucose 6-phosphate pocket. Residues 363–364 (SV) and 390–394 (LVSFE) contribute to the UDP site. Position 386–394 (386–394 (DGMNLVSFE)) interacts with UDP-alpha-D-glucose.

This sequence belongs to the glycosyltransferase 20 family.

It catalyses the reaction D-glucose 6-phosphate + UDP-alpha-D-glucose = alpha,alpha-trehalose 6-phosphate + UDP + H(+). The protein operates within carbohydrate biosynthesis. Functionally, synthase catalytic subunit of the trehalose synthase complex that catalyzes the production of trehalose from glucose-6-phosphate and UDP-alpha-D-glucose in a two step process. The disaccharide trehalose serves as a storage carbohydrate that is mobilized during conidial germination. Regulates the level of trehalose as a protectant for cell integrity during thermal and oxidative stress. The sequence is that of Alpha,alpha-trehalose-phosphate synthase [UDP-forming] 2 from Aspergillus fumigatus (strain ATCC MYA-4609 / CBS 101355 / FGSC A1100 / Af293) (Neosartorya fumigata).